The chain runs to 466 residues: Phosphoenolpyruvate carboxykinase (ATP) (466 aa).

Residues R61, Y196, and K202 each contribute to the substrate site. Residues K202, H221, and 237–245 (GLSGTGKTT) contribute to the ATP site. Mn(2+) contacts are provided by K202 and H221. D258 is a binding site for Mn(2+). Residues E286, R323, and T448 each contribute to the ATP site. R323 serves as a coordination point for substrate.

This sequence belongs to the phosphoenolpyruvate carboxykinase (ATP) family. It depends on Mn(2+) as a cofactor.

It is found in the cytoplasm. The enzyme catalyses oxaloacetate + ATP = phosphoenolpyruvate + ADP + CO2. It functions in the pathway carbohydrate biosynthesis; gluconeogenesis. In terms of biological role, involved in the gluconeogenesis. Catalyzes the conversion of oxaloacetate (OAA) to phosphoenolpyruvate (PEP) through direct phosphoryl transfer between the nucleoside triphosphate and OAA. The sequence is that of Phosphoenolpyruvate carboxykinase (ATP) from Deinococcus radiodurans (strain ATCC 13939 / DSM 20539 / JCM 16871 / CCUG 27074 / LMG 4051 / NBRC 15346 / NCIMB 9279 / VKM B-1422 / R1).